The sequence spans 285 residues: HTH-type transcriptional regulator MurR (285 aa).

The HTH rpiR-type domain occupies 1–77; sequence MLYLTKISNA…MALIGEYSAS (77 aa). A DNA-binding region (H-T-H motif) is located at residues 37–56; the sequence is SRQMAKQLGISQSSIVKFAQ. Positions 128–279 constitute an SIS domain; the sequence is IIEVISKAPF…SLKMIQRSSE (152 aa).

In terms of assembly, homotetramer.

The protein operates within amino-sugar metabolism; N-acetylmuramate degradation [regulation]. Represses the expression of the murPQ operon involved in the uptake and degradation of N-acetylmuramic acid (MurNAc). Binds to two adjacent inverted repeats within the operator region. MurNAc 6-phosphate, the substrate of MurQ, is the specific inducer that weakens binding of MurR to the operator. The chain is HTH-type transcriptional regulator MurR from Shigella boydii serotype 4 (strain Sb227).